The chain runs to 918 residues: Isoleucine--tRNA ligase (918 aa).

A 'HIGH' region motif is present at residues 59–69; the sequence is PYANGHLHIGH. L-isoleucyl-5'-AMP is bound at residue E570. The short motif at 611–615 is the 'KMSKS' region element; the sequence is KMSKS. K614 contributes to the ATP binding site. Zn(2+) contacts are provided by C893, C896, C908, and C911.

The protein belongs to the class-I aminoacyl-tRNA synthetase family. IleS type 1 subfamily. In terms of assembly, monomer. The cofactor is Zn(2+).

The protein resides in the cytoplasm. The catalysed reaction is tRNA(Ile) + L-isoleucine + ATP = L-isoleucyl-tRNA(Ile) + AMP + diphosphate. Functionally, catalyzes the attachment of isoleucine to tRNA(Ile). As IleRS can inadvertently accommodate and process structurally similar amino acids such as valine, to avoid such errors it has two additional distinct tRNA(Ile)-dependent editing activities. One activity is designated as 'pretransfer' editing and involves the hydrolysis of activated Val-AMP. The other activity is designated 'posttransfer' editing and involves deacylation of mischarged Val-tRNA(Ile). This chain is Isoleucine--tRNA ligase, found in Campylobacter concisus (strain 13826).